The primary structure comprises 506 residues: Maturase K (506 aa).

This sequence belongs to the intron maturase 2 family. MatK subfamily.

Its subcellular location is the plastid. The protein resides in the chloroplast. Functionally, usually encoded in the trnK tRNA gene intron. Probably assists in splicing its own and other chloroplast group II introns. This chain is Maturase K, found in Trifolium fragiferum (Strawberry clover).